The following is a 400-amino-acid chain: Putative F-box protein At1g30920 (400 aa).

An F-box domain is found at 4 to 49; that stretch reads EENTDSIPIDLILDILSRLPSKSIARCRCVSKLWESMIRQSYFTEL.

This Arabidopsis thaliana (Mouse-ear cress) protein is Putative F-box protein At1g30920.